The primary structure comprises 653 residues: Fidgetin-like protein 2 (653 aa).

Disordered regions lie at residues 1–36, 86–129, and 216–240; these read MHWT…ELPP, ASFL…SGAL, and YGAL…APTP. The segment covering 10-27 has biased composition (polar residues); sequence PLNQWPEQHLDVSSTTPS. The span at 97–107 shows a compositional bias: pro residues; the sequence is EPWPGPEPPYP. The segment covering 119 to 129 has biased composition (gly residues); it reads KSGGGGGSGAL. Residues 219–240 show a composition bias toward pro residues; it reads LPPPPGPPPAPYLTPGLPAPTP. ATP is bound by residues A395 and 435 to 440; that span reads GAGKAL.

The protein belongs to the AAA ATPase family. It depends on Mg(2+) as a cofactor.

Its subcellular location is the cytoplasm. It localises to the cell cortex. It catalyses the reaction ATP + H2O = ADP + phosphate + H(+). Functionally, microtubule-severing enzyme that negatively regulates cell migration and wound healing. In migrating cells, targets dynamic microtubules (MTs) at the leading edge and severs them, thereby suppressing motility. Microtubule severing releases ARHGEF2 which activates RHOA, which in turn regulates focal ahesion turnover via focal adhesion kinase, as opposed to F-actin polymerization, to suppress cell motility. Negative regulator of axon regeneration that suppresses axonal growth by selectively severing dynamic MTs in the distal axon shaft and growth cone. Contributes to proper cell branching during endothelial and neuronal development. The chain is Fidgetin-like protein 2 from Homo sapiens (Human).